Here is a 572-residue protein sequence, read N- to C-terminus: Proline--tRNA ligase (572 aa).

This sequence belongs to the class-II aminoacyl-tRNA synthetase family. ProS type 1 subfamily. In terms of assembly, homodimer.

It localises to the cytoplasm. The enzyme catalyses tRNA(Pro) + L-proline + ATP = L-prolyl-tRNA(Pro) + AMP + diphosphate. Functionally, catalyzes the attachment of proline to tRNA(Pro) in a two-step reaction: proline is first activated by ATP to form Pro-AMP and then transferred to the acceptor end of tRNA(Pro). As ProRS can inadvertently accommodate and process non-cognate amino acids such as alanine and cysteine, to avoid such errors it has two additional distinct editing activities against alanine. One activity is designated as 'pretransfer' editing and involves the tRNA(Pro)-independent hydrolysis of activated Ala-AMP. The other activity is designated 'posttransfer' editing and involves deacylation of mischarged Ala-tRNA(Pro). The misacylated Cys-tRNA(Pro) is not edited by ProRS. This Erwinia tasmaniensis (strain DSM 17950 / CFBP 7177 / CIP 109463 / NCPPB 4357 / Et1/99) protein is Proline--tRNA ligase.